The sequence spans 309 residues: Transcription termination/antitermination protein NusG (309 aa).

Disordered stretches follow at residues 1-24 (MSDP…ADDE) and 58-91 (EGDH…VEAG). Acidic residues predominate over residues 65–91 (TDEDIEAGAVETDEDVETDTDEDVEAG).

It belongs to the NusG family.

Functionally, participates in transcription elongation, termination and antitermination. This Streptomyces galbus protein is Transcription termination/antitermination protein NusG.